Here is a 67-residue protein sequence, read N- to C-terminus: Large ribosomal subunit protein bL28 (67 aa).

Belongs to the bacterial ribosomal protein bL28 family.

This is Large ribosomal subunit protein bL28 from Nitratiruptor sp. (strain SB155-2).